The sequence spans 322 residues: Epoxide hydrolase A (322 aa).

Residues 27 to 131 form the AB hydrolase-1 domain; the sequence is PVVILAHGFP…AVAALSVPAL (105 aa). Residue Asp-103 is the Nucleophile of the active site. The Proton acceptor role is filled by His-298.

This sequence belongs to the AB hydrolase superfamily. Epoxide hydrolase family. As to quaternary structure, homodimer.

It catalyses the reaction an epoxide + H2O = an ethanediol. Could be involved in detoxification of extraneous host-cell epoxides. Catalyzes the hydrolysis of epoxide-containing substrates. The sequence is that of Epoxide hydrolase A (ephA) from Mycobacterium tuberculosis (strain ATCC 25618 / H37Rv).